The primary structure comprises 500 residues: UDP-N-acetylmuramoyl-L-alanyl-D-glutamate--2,6-diaminopimelate ligase (500 aa).

Residues Leu-26, Ser-28, and 43-45 (HQV) each bind UDP-N-acetyl-alpha-D-muramoyl-L-alanyl-D-glutamate. 123–129 (GTNGKTT) is an ATP binding site. UDP-N-acetyl-alpha-D-muramoyl-L-alanyl-D-glutamate contacts are provided by residues Asn-164, 165 to 166 (TT), Ser-192, Gln-198, and Arg-200. At Lys-232 the chain carries N6-carboxylysine. Meso-2,6-diaminopimelate is bound by residues Arg-399, 423–426 (DNPR), Gly-474, and Glu-478. The Meso-diaminopimelate recognition motif signature appears at 423–426 (DNPR).

This sequence belongs to the MurCDEF family. MurE subfamily. It depends on Mg(2+) as a cofactor. Carboxylation is probably crucial for Mg(2+) binding and, consequently, for the gamma-phosphate positioning of ATP.

Its subcellular location is the cytoplasm. The enzyme catalyses UDP-N-acetyl-alpha-D-muramoyl-L-alanyl-D-glutamate + meso-2,6-diaminopimelate + ATP = UDP-N-acetyl-alpha-D-muramoyl-L-alanyl-gamma-D-glutamyl-meso-2,6-diaminopimelate + ADP + phosphate + H(+). Its pathway is cell wall biogenesis; peptidoglycan biosynthesis. Catalyzes the addition of meso-diaminopimelic acid to the nucleotide precursor UDP-N-acetylmuramoyl-L-alanyl-D-glutamate (UMAG) in the biosynthesis of bacterial cell-wall peptidoglycan. The protein is UDP-N-acetylmuramoyl-L-alanyl-D-glutamate--2,6-diaminopimelate ligase of Actinobacillus pleuropneumoniae serotype 5b (strain L20).